The sequence spans 318 residues: CRISPR-associated protein Cas7/Csa2 1 (318 aa).

The protein belongs to the CRISPR-associated protein Cas7/Cst2/DevR family. Subtype I-a/Apern subfamily. Part of the aCascade ribonucleoprotein complex, minimally composed of Csa2 and Cas5a, which binds crRNA. Other possible components of aCascade in strain P1 are Cas6b (SSO1437) and Csa5 (SSO1443), while SSO1399, Cas5b (SSO1400) and SSO1401 have sometimes been seen weakly associated. Csa2 is probably the major RNA-binding subunit. The Csa2-Cas5a-crRNA complex also binds target DNA homologous to crRNA, probably forming an R-loop. Purified aCascade forms a filament about 6 nm in width.

Functionally, CRISPR (clustered regularly interspaced short palindromic repeat) is an adaptive immune system that provides protection against mobile genetic elements (viruses, transposable elements and conjugative plasmids). CRISPR clusters contain spacers, sequences complementary to antecedent mobile elements, and target invading nucleic acids. CRISPR clusters are transcribed and processed into CRISPR RNA (crRNA). The polypeptide is CRISPR-associated protein Cas7/Csa2 1 (cas7a) (Saccharolobus solfataricus (strain ATCC 35092 / DSM 1617 / JCM 11322 / P2) (Sulfolobus solfataricus)).